The following is a 434-amino-acid chain: G2/mitotic-specific cyclin-2 (434 aa).

It belongs to the cyclin family. Cyclin AB subfamily. Interacts with the CDC2 protein kinase to form a serine/threonine kinase holoenzyme complex also known as maturation promoting factor (MPF). The cyclin subunit imparts substrate specificity to the complex.

Functionally, essential for the control of the cell cycle at the G2/M (mitosis) transition. The polypeptide is G2/mitotic-specific cyclin-2 (Medicago sativa subsp. varia (Alfalfa)).